The chain runs to 290 residues: Protease HtpX (290 aa).

2 helical membrane passes run 6 to 26 (LFLV…NILF) and 36 to 56 (ISGL…ISLL). H143 lines the Zn(2+) pocket. E144 is an active-site residue. Residue H147 coordinates Zn(2+). 2 consecutive transmembrane segments (helical) span residues 158-178 (LIQG…AGVI) and 200-220 (ITVF…VMWF). E225 is a Zn(2+) binding site.

The protein belongs to the peptidase M48B family. Zn(2+) serves as cofactor.

Its subcellular location is the cell inner membrane. This chain is Protease HtpX, found in Aeromonas salmonicida (strain A449).